Consider the following 215-residue polypeptide: Cytochrome b6 (215 aa).

Residues 32–52 traverse the membrane as a helical segment; that stretch reads IFYCLGGITLTCFLVQVATGF. Residue Cys-35 participates in heme c binding. Residues His-86 and His-100 each coordinate heme b. 3 consecutive transmembrane segments (helical) span residues 90–110, 116–136, and 186–206; these read ASMM…TGGF, LTWV…VTGY, and LHTF…FPMI. 2 residues coordinate heme b: His-187 and His-202.

The protein belongs to the cytochrome b family. PetB subfamily. In terms of assembly, the 4 large subunits of the cytochrome b6-f complex are cytochrome b6, subunit IV (17 kDa polypeptide, PetD), cytochrome f and the Rieske protein, while the 4 small subunits are PetG, PetL, PetM and PetN. The complex functions as a dimer. The cofactor is heme b. It depends on heme c as a cofactor.

The protein localises to the plastid. It is found in the chloroplast thylakoid membrane. Its function is as follows. Component of the cytochrome b6-f complex, which mediates electron transfer between photosystem II (PSII) and photosystem I (PSI), cyclic electron flow around PSI, and state transitions. This Vitis vinifera (Grape) protein is Cytochrome b6.